The chain runs to 110 residues: Thioredoxin (110 aa).

Residues 2-110 (SALLVEIDKD…IDAMIAKHVG (109 aa)) form the Thioredoxin domain. Cysteines 33 and 36 form a disulfide.

Belongs to the thioredoxin family.

In terms of biological role, participates in various redox reactions through the reversible oxidation of its active center dithiol to a disulfide and catalyzes dithiol-disulfide exchange reactions. The sequence is that of Thioredoxin (trxA) from Peptoclostridium acidaminophilum (Eubacterium acidaminophilum).